A 697-amino-acid polypeptide reads, in one-letter code: Potassium-transporting ATPase ATP-binding subunit (697 aa).

A run of 4 helical transmembrane segments spans residues 36-56 (VMFV…RDLI), 66-86 (LQII…EAVA), 218-238 (IALN…TATI), and 253-273 (VLVA…LSAI). Catalysis depends on Asp-306, which acts as the 4-aspartylphosphate intermediate. ATP is bound by residues Asp-343, Glu-347, 376–383 (FTAQTRMS), and Lys-394. Positions 526 and 530 each coordinate Mg(2+). Transmembrane regions (helical) follow at residues 595–615 (YFAI…QSTG), 631–651 (AILS…PLSL), and 669–689 (LLVY…IIDM).

It belongs to the cation transport ATPase (P-type) (TC 3.A.3) family. Type IA subfamily. The system is composed of three essential subunits: KdpA, KdpB and KdpC.

The protein resides in the cell inner membrane. The enzyme catalyses K(+)(out) + ATP + H2O = K(+)(in) + ADP + phosphate + H(+). In terms of biological role, part of the high-affinity ATP-driven potassium transport (or Kdp) system, which catalyzes the hydrolysis of ATP coupled with the electrogenic transport of potassium into the cytoplasm. This subunit is responsible for energy coupling to the transport system and for the release of the potassium ions to the cytoplasm. The polypeptide is Potassium-transporting ATPase ATP-binding subunit (Mesorhizobium japonicum (strain LMG 29417 / CECT 9101 / MAFF 303099) (Mesorhizobium loti (strain MAFF 303099))).